A 603-amino-acid polypeptide reads, in one-letter code: DNA mismatch repair protein MutL (603 aa).

Positions 336–346 (EVSKKQKEQQK) are enriched in basic and acidic residues. The segment at 336–372 (EVSKKQKEQQKSEQIQMSFEENRQPKEPPTLFSKPNI) is disordered.

This sequence belongs to the DNA mismatch repair MutL/HexB family.

Functionally, this protein is involved in the repair of mismatches in DNA. It is required for dam-dependent methyl-directed DNA mismatch repair. May act as a 'molecular matchmaker', a protein that promotes the formation of a stable complex between two or more DNA-binding proteins in an ATP-dependent manner without itself being part of a final effector complex. In Listeria innocua serovar 6a (strain ATCC BAA-680 / CLIP 11262), this protein is DNA mismatch repair protein MutL.